A 224-amino-acid chain; its full sequence is UPF0758 protein BLi02933/BL00636 (224 aa).

One can recognise an MPN domain in the interval 102–224 (VIRFPEDAAN…FVSLKEKGYL (123 aa)). Histidine 173, histidine 175, and aspartate 186 together coordinate Zn(2+). Residues 173–186 (HNHPSGDPAPSRED) carry the JAMM motif motif.

The protein belongs to the UPF0758 family.

The chain is UPF0758 protein BLi02933/BL00636 from Bacillus licheniformis (strain ATCC 14580 / DSM 13 / JCM 2505 / CCUG 7422 / NBRC 12200 / NCIMB 9375 / NCTC 10341 / NRRL NRS-1264 / Gibson 46).